A 339-amino-acid polypeptide reads, in one-letter code: MQTIWPHKHIHTLANFSIQDYKSVFELAHRFDVLKNAGTKKIPALQGTLVTSLFFEASTRTKNSFELAAKRLSADVQTFAPSSSSLTKGETIIDTALTYSAMGADTLVIRHSSSYITFEIAKKLDAINAKTSVLNAGDGLHSHPSQGLLDIYTLIKFFSKKSLSPDVLNSKKILIIGDVNHSRVARSNLWALSAFGADIILCGPKTLIPDEFINFLKTPAPKQKEDPVKSRGSITISRSLEESIKIADAIIVLRLQKERMMENLLSSIDSYSLDYGLTPEKLSLNSKEIPILHPGPINRGIEITSKVVDEYPNCLINNQVANGIPIRMALLYLLQKYNK.

2 residues coordinate carbamoyl phosphate: Arg-60 and Thr-61. Lys-88 contributes to the L-aspartate binding site. Residues Arg-110, His-143, and Gln-146 each contribute to the carbamoyl phosphate site. The L-aspartate site is built by Arg-183 and Arg-254. Carbamoyl phosphate is bound by residues Gly-295 and Pro-296.

Belongs to the aspartate/ornithine carbamoyltransferase superfamily. ATCase family. Heterododecamer (2C3:3R2) of six catalytic PyrB chains organized as two trimers (C3), and six regulatory PyrI chains organized as three dimers (R2).

The enzyme catalyses carbamoyl phosphate + L-aspartate = N-carbamoyl-L-aspartate + phosphate + H(+). It participates in pyrimidine metabolism; UMP biosynthesis via de novo pathway; (S)-dihydroorotate from bicarbonate: step 2/3. In terms of biological role, catalyzes the condensation of carbamoyl phosphate and aspartate to form carbamoyl aspartate and inorganic phosphate, the committed step in the de novo pyrimidine nucleotide biosynthesis pathway. This chain is Aspartate carbamoyltransferase catalytic subunit, found in Prochlorococcus marinus (strain MIT 9312).